The sequence spans 124 residues: Small ribosomal subunit protein uS13 (124 aa).

The tract at residues G95–K124 is disordered.

This sequence belongs to the universal ribosomal protein uS13 family. In terms of assembly, part of the 30S ribosomal subunit. Forms a loose heterodimer with protein S19. Forms two bridges to the 50S subunit in the 70S ribosome.

Functionally, located at the top of the head of the 30S subunit, it contacts several helices of the 16S rRNA. In the 70S ribosome it contacts the 23S rRNA (bridge B1a) and protein L5 of the 50S subunit (bridge B1b), connecting the 2 subunits; these bridges are implicated in subunit movement. Contacts the tRNAs in the A and P-sites. The chain is Small ribosomal subunit protein uS13 from Rhodococcus erythropolis (strain PR4 / NBRC 100887).